The following is a 313-amino-acid chain: Ribosomal RNA small subunit methyltransferase H (313 aa).

Residues 37–39, aspartate 57, phenylalanine 82, aspartate 104, and glutamine 111 each bind S-adenosyl-L-methionine; that span reads GGH.

Belongs to the methyltransferase superfamily. RsmH family.

Its subcellular location is the cytoplasm. It catalyses the reaction cytidine(1402) in 16S rRNA + S-adenosyl-L-methionine = N(4)-methylcytidine(1402) in 16S rRNA + S-adenosyl-L-homocysteine + H(+). In terms of biological role, specifically methylates the N4 position of cytidine in position 1402 (C1402) of 16S rRNA. The sequence is that of Ribosomal RNA small subunit methyltransferase H from Alteromonas mediterranea (strain DSM 17117 / CIP 110805 / LMG 28347 / Deep ecotype).